Reading from the N-terminus, the 118-residue chain is Large ribosomal subunit protein uL22 (118 aa).

Belongs to the universal ribosomal protein uL22 family. In terms of assembly, part of the 50S ribosomal subunit.

Its function is as follows. This protein binds specifically to 23S rRNA; its binding is stimulated by other ribosomal proteins, e.g. L4, L17, and L20. It is important during the early stages of 50S assembly. It makes multiple contacts with different domains of the 23S rRNA in the assembled 50S subunit and ribosome. In terms of biological role, the globular domain of the protein is located near the polypeptide exit tunnel on the outside of the subunit, while an extended beta-hairpin is found that lines the wall of the exit tunnel in the center of the 70S ribosome. This Pediococcus pentosaceus (strain ATCC 25745 / CCUG 21536 / LMG 10740 / 183-1w) protein is Large ribosomal subunit protein uL22.